A 689-amino-acid polypeptide reads, in one-letter code: DNA topoisomerase 1 (689 aa).

The 111-residue stretch at 3–113 folds into the Toprim domain; it reads DNLVIVESPA…KENRVVFNEI (111 aa). The Mg(2+) site is built by Glu-9 and Asp-82. The region spanning 129–557 is the Topo IA-type catalytic domain; sequence EMNLVDAQQA…FFSSFKQDVE (429 aa). Residues 163-168 form an interaction with DNA region; the sequence is SAGRVQ. The active-site O-(5'-phospho-DNA)-tyrosine intermediate is Tyr-298. The interval 328–357 is disordered; that stretch reads SKRKASGKQGDQDAHEAIRPSSTMRTPDDM. 3 C4-type zinc fingers span residues 577-603, 617-645, and 658-681; these read CEVC…FPDC, CPKC…YPEC, and CPKC…CSNC.

It belongs to the type IA topoisomerase family. Monomer. The cofactor is Mg(2+).

The enzyme catalyses ATP-independent breakage of single-stranded DNA, followed by passage and rejoining.. Its function is as follows. Releases the supercoiling and torsional tension of DNA, which is introduced during the DNA replication and transcription, by transiently cleaving and rejoining one strand of the DNA duplex. Introduces a single-strand break via transesterification at a target site in duplex DNA. The scissile phosphodiester is attacked by the catalytic tyrosine of the enzyme, resulting in the formation of a DNA-(5'-phosphotyrosyl)-enzyme intermediate and the expulsion of a 3'-OH DNA strand. The free DNA strand then undergoes passage around the unbroken strand, thus removing DNA supercoils. Finally, in the religation step, the DNA 3'-OH attacks the covalent intermediate to expel the active-site tyrosine and restore the DNA phosphodiester backbone. The protein is DNA topoisomerase 1 of Staphylococcus aureus (strain N315).